Here is a 49-residue protein sequence, read N- to C-terminus: Splenin (49 aa).

Residues 4 to 47 (LEDPSVLTKEKLKSELVANNVTLPAGEQRKEVYVELYLQHLTAL) enclose the LEM-like domain. Residues 32–36 (RKEVY) are essential for biological activity.

This sequence belongs to the thymopoietin family.

In terms of biological role, hormone of the spleen with pleiotropic actions on prothymocytes, mature T-cells, the nicotinic acetylcholine receptor, and pituitary corticotrophs. This is Splenin (SP) from Bos taurus (Bovine).